Here is a 1084-residue protein sequence, read N- to C-terminus: Cellulose synthase A catalytic subunit 6 [UDP-forming] (1084 aa).

Methionine 1 is modified (N-acetylmethionine). The Cytoplasmic portion of the chain corresponds to 1-277; it reads MNTGGRLIAG…KSSKINPYRM (277 aa). Cysteine 39, cysteine 42, cysteine 58, cysteine 61, cysteine 66, cysteine 69, cysteine 81, and cysteine 84 together coordinate Zn(2+). The RING-type; degenerate zinc finger occupies 39–85; it reads CQICRDEIELTVDGEPFVACNECAFPVCRPCYEYERREGNQACPQCK. The helical transmembrane segment at 278-298 threads the bilayer; that stretch reads LIVLRLVILGLFFHYRILHPV. The Extracellular portion of the chain corresponds to 299–300; it reads KD. A helical membrane pass occupies residues 301–321; sequence AYALWLISVICEIWFAVSWVL. Residues 322 to 868 lie on the Cytoplasmic side of the membrane; it reads DQFPKWYPIE…INSVVYPWTS (547 aa). Serine 360, lysine 366, glutamate 367, and aspartate 396 together coordinate UDP-alpha-D-glucose. Residue aspartate 396 is part of the active site. A coiled-coil region spans residues 450-476; that stretch reads VRERRAMKRDYEEFKVKINALVATAQK. Lysine 537 contributes to the UDP-alpha-D-glucose binding site. Residues lysine 538 and aspartate 562 each contribute to the Mn(2+) site. Residues 675–703 are a coiled coil; it reads RKAKTVAADKKKKNREASKQIHALENIEE. Aspartate 785 is a catalytic residue. Residues 869-889 traverse the membrane as a helical segment; that stretch reads LPLIVYCSLPAICLLTGKFIV. Residues 890–894 are Extracellular-facing; that stretch reads PEISN. The helical transmembrane segment at 895–915 threads the bilayer; the sequence is YASILFMALFSSIAITGILEM. The Cytoplasmic portion of the chain corresponds to 916 to 930; it reads QWGKVGIDDWWRNEQ. Residues 931–951 form a helical membrane-spanning segment; that stretch reads FWVIGGVSAHLFALFQGLLKV. The Extracellular segment spans residues 952-980; the sequence is LAGVDTNFTVTSKAADDGEFSDLYLFKWT. Asparagine 958 carries an N-linked (GlcNAc...) asparagine glycan. A helical membrane pass occupies residues 981-1001; it reads SLLIPPMTLLIINVIGVIVGV. The Cytoplasmic segment spans residues 1002 to 1012; the sequence is SDAISNGYDSW. A helical membrane pass occupies residues 1013-1033; the sequence is GPLFGRLFFALWVIIHLYPFL. Residues 1034–1042 are Extracellular-facing; the sequence is KGLLGKQDR. Residues 1043–1063 form a helical membrane-spanning segment; sequence MPTIIVVWSILLASILTLLWV. At 1064–1084 the chain is on the cytoplasmic side; that stretch reads RVNPFVAKGGPILEICGLDCL.

It belongs to the glycosyltransferase 2 family. Plant cellulose synthase subfamily. Interacts with CESA1 and CESA3. Interacts with STL1 and STL2, but not with GOT1. Binds to CSI1 and CSI3. Interacts with PAT24/TIP1. Zn(2+) is required as a cofactor. Requires Mn(2+) as cofactor. In terms of processing, S-acylated. As to expression, expressed in germinating seeds, seedlings, roots, stems, leaves and flowers. Not present in mature flowers.

The protein localises to the cell membrane. It carries out the reaction [(1-&gt;4)-beta-D-glucosyl](n) + UDP-alpha-D-glucose = [(1-&gt;4)-beta-D-glucosyl](n+1) + UDP + H(+). It functions in the pathway glycan metabolism; plant cellulose biosynthesis. In terms of biological role, catalytic subunit of cellulose synthase terminal complexes ('rosettes'), required for beta-1,4-glucan microfibril crystallization, a major mechanism of the cell wall formation. Involved in the primary cell wall formation. The presence of each protein CESA1 and CESA6 is critical for cell expansion. The hypocotyl elongation is based on a CESA6-dependent cell elongation in dark and a CESA6-independent cell elongation in light. The transition between these two mechanisms requires photosynthesis and PHYB, but not CRY1. The CESA6-dependent cell elongation seems to be independent of gibberellic acid, auxin and ethylene. May be involved in sensitivity to isoxaben. Associates with and moves along cortical microtubules for the process of cellulose deposition. The protein is Cellulose synthase A catalytic subunit 6 [UDP-forming] of Arabidopsis thaliana (Mouse-ear cress).